We begin with the raw amino-acid sequence, 130 residues long: Iron-sulfur cluster insertion protein ErpA (130 aa).

The iron-sulfur cluster site is built by Cys46, Cys116, and Cys118.

The protein belongs to the HesB/IscA family. As to quaternary structure, homodimer. Iron-sulfur cluster is required as a cofactor.

In terms of biological role, required for insertion of 4Fe-4S clusters for at least IspG. The chain is Iron-sulfur cluster insertion protein ErpA from Legionella pneumophila subsp. pneumophila (strain Philadelphia 1 / ATCC 33152 / DSM 7513).